The primary structure comprises 319 residues: tRNA-modifying protein YgfZ (319 aa).

W27 and W189 together coordinate folate.

Belongs to the tRNA-modifying YgfZ family.

The protein resides in the cytoplasm. Functionally, folate-binding protein involved in regulating the level of ATP-DnaA and in the modification of some tRNAs. It is probably a key factor in regulatory networks that act via tRNA modification, such as initiation of chromosomal replication. This Buchnera aphidicola subsp. Acyrthosiphon pisum (strain APS) (Acyrthosiphon pisum symbiotic bacterium) protein is tRNA-modifying protein YgfZ.